Here is a 964-residue protein sequence, read N- to C-terminus: MQKIKSLMTRQGLKSPPESLNDLGAFESLRVPGKEEFRELREQPSDPQAEQELINSIEQVYFSADPFDIVKYELEKLPPVLNLQELEEYRDKLKQQQSAVSKKVADLILEKQPAYVKELERVTSLQTGLQLAAVICTNGRRHLNIAKEGFTQASLGLLANQRKRQLLIGLLKSLRTIKTLQRTDIRLSEMLEEEDYPGAIQLCLECQKAASTFKHYSCISELNSKLQDTLEQIEEQLDVALSKICKNFDINHYTKVQQAYRLLGKTQTAMDQLHMHFTQAIHNTVFQVVLGYVELCAGNTDTKFQKLQYKDLCTHVTPDSYIPCLADLCKALWEVMLSYYRTMEWHEKHDNEETAAAAEGSNVMSTEEATFDRGYVKKKLEHGLTRIWQDVQLKVKTYLLGTDLSIFKYDDFIFVLDIVSRLMQVGEEFCGSKSEVLQESIRKQSVNYFKNHHRIRLDELRMFLENETWELCPVKSNFSILQLHEFKFLEQSRSPSVSPSKQPSATSSKPVTLFEQYCSGGNPFEIQADHKDEETEDVLASNGYESDEQEKSAYQDYDSDSDVPEELKRDYVDEQTGDVPVKSVSRETLKSRKKSDYSLNKVNAPILTNTTLNVIRLVGKYMQMMNILKPIAFDVIHFMSQLFDYYLYAIYTFFGRNDSLESTGLGLSSSRLKTTLNRIQESLIDLEGSADPTATLTAAEERKEKVPSPHLNQLVILTSGDTLYGLAERVVATESLVFLAEQFEFLQPHLDAVMPAVKKPFLQQFYSQTVSTASELRKPIYWIVAGKAIDYEQMLLLMMNVKWDVKEIMSQHNIYVDALLKEFEQFNKRLNEVSKRVRIPLPVSNILWEHCIRLANRTIVEGYANVKKCSNEGRALMQLDFQQFLMKLEKLTDIRPIPDKEFVETYIKAYYLTENDMERWIKEHREYSTKQLTNLVNVCLGSHINKKARQKLLAAIDEIDRPKR.

M1 carries the post-translational modification N-acetylmethionine. The interval M1–A25 is disordered. S15 carries the post-translational modification Phosphoserine. Coiled-coil stretches lie at residues L81–L107 and Y216–I244. Phosphoserine occurs at positions 494, 498, 559, and 561. A disordered region spans residues D532 to V563. K963 participates in a covalent cross-link: Glycyl lysine isopeptide (Lys-Gly) (interchain with G-Cter in SUMO1); alternate. K963 is covalently cross-linked (Glycyl lysine isopeptide (Lys-Gly) (interchain with G-Cter in SUMO2); alternate).

The protein belongs to the syndetin family. In terms of assembly, component of the endosome-associated retrograde protein (EARP) complex, composed of VPS51, VPS52, VPS53 and VPS50/Syndetin. The EARP complex interacts with EIPR1. Interacts with VPS51 and VPS53 in an EIPR1-independent manner.

It is found in the recycling endosome. The protein localises to the membrane. In terms of biological role, acts as a component of the EARP complex that is involved in endocytic recycling. The EARP complex associates with Rab4-positive endosomes and promotes recycling of internalized transferrin receptor (TFRC) to the plasma membrane. Within the EARP complex, required to tether the complex to recycling endosomes. Not involved in retrograde transport from early and late endosomes to the trans-Golgi network (TGN). The polypeptide is Syndetin (Mus musculus (Mouse)).